The chain runs to 851 residues: MDKYISKTPLSCYFEELVDTFISVVNSINKVDESKHHEVELILFKPPIITLTNLYNMATTTESYIEFTMLPVDKPNTKFRNRIPLSKIHGLDVKNNQLVESLDGFIWEEKSLLLKKDISDNSSAIIKYSIEEKTLFVDYKRRNASIKLELVSVVRAKLRNIVIDFKMKYFLGSGAQSANSSSLLCALNHPKNKPSLYIEFEIMMQDKNISKKKLLEELNMSASALFLSHPKYIRLCPSINPILRTHLLKKQDIININTDDLYITSKTDGIFSHVYIEKKSIFCYFSHLGYIKEYTASREIEETIYLYAEMRKEESILYLTVIKVLKPCMEDRLSELAFVKNHLTGIHDRLVFVTKCYDGPFESSSDLVVSIEEMLKTEQEGIILFYSKGEDSTTDYKVKKDNTIDQCVNVIYRYMSSEPIVFNDKGSFLEYKRYSNDKGFPKEFSTGKLDLNGSVEYINNIYCIEIKHLNPCTGITNLVLPIKFIAEFSHNDELIQPRIDKTMKYLYESGYYGNQLSVIMDHLNDQKLRIGDVFEEEKLADIAAHMKLKDSMRLNPDGNYFLSNRVRGALGILSNFVKTLLISLYCSKTYLDNHSKRKVLAIDFGNGADLEKYFYGEIALMVATDPDDNAIETGKKRYNERNAGDKSKYYKFNYIKETIRSETYVSSIRQVLYFEKFSLVDWQFAIHYSFHPKHYSTIMTNLQELTESGCKVLITTMDGDYLDTLKEKKKFIIRKLLPETENYLSIEKIDDDKVLVYNPSSMSKPMAEYIVRRDTLIRVFREYKFKLIDSCNFKTIIDRNISFINGVSRLESRGSTKNFFELNRKALEECNDTDVLELLSHYMVYVFSKEV.

Positions 1–544 (MDKYISKTPL…EEEKLADIAA (544 aa)) are triphosphatase-guanylyltransferase. Mg(2+)-binding residues include E38, E40, E199, and E201. K266 (N6-GMP-lysine intermediate) is an active-site residue. S-adenosyl-L-methionine is bound at residue 554 to 555 (LN). The mRNA cap 0 methyltransferase domain maps to 565–850 (RVRGALGILS…HYMVYVFSKE (286 aa)). 574 to 575 (SN) is an mRNA binding site. Residues K578, D603, D625, and 683–685 (QFA) each bind S-adenosyl-L-methionine.

The protein in the N-terminal section; belongs to the dsDNA virus mRNA guanylyltransferase family. It in the C-terminal section; belongs to the class I-like SAM-binding methyltransferase superfamily. mRNA cap 0 methyltransferase family. In terms of assembly, heterodimer of a catalytic and a regulatory subunit. Intrinsic methyltransferase activity of the catalytic subunit is weak and needs to be stimulated 30- to 50-fold by the regulatory subunit, which is itself catalytically inert. Mg(2+) serves as cofactor.

Its subcellular location is the virion. It carries out the reaction a 5'-end triphospho-ribonucleoside in mRNA + H2O = a 5'-end diphospho-ribonucleoside in mRNA + phosphate + H(+). The catalysed reaction is a 5'-end diphospho-ribonucleoside in mRNA + GTP + H(+) = a 5'-end (5'-triphosphoguanosine)-ribonucleoside in mRNA + diphosphate. It catalyses the reaction a 5'-end (5'-triphosphoguanosine)-ribonucleoside in mRNA + S-adenosyl-L-methionine = a 5'-end (N(7)-methyl 5'-triphosphoguanosine)-ribonucleoside in mRNA + S-adenosyl-L-homocysteine. In terms of biological role, catalytic subunit of the mRNA capping enzyme which catalyzes three enzymatic reactions: the 5' triphosphate end of the pre-mRNA is hydrolyzed to a diphosphate by RNA 5' triphosphatase; the diphosphate RNA end is capped with GMP by RNA guanylyltransferase and the GpppN cap is methylated by RNA (guanine-N7) methyltransferase. Heterodimeric mRNA capping enzyme catalyzes the linkage of a N7-methyl-guanosine moiety to the first transcribed nucleotide (cap 0 structure), whereas the polymerase associated VP39 is responsible for a second methylation at the 2'-O position of the ribose (cap 1 structure). Functionally, the heterodimeric enzyme is also involved in early viral gene transcription termination and intermediate viral gene transcription initiation. Early gene transcription termination requires the termination factor VTF, the DNA-dependent ATPase NPH-I and the Rap94 subunit of the viral RNA polymerase, as well as the presence of a specific termination motif. Binds, together with RAP94, to the termination motif 5'-UUUUUNU-3' in the nascent early mRNA. This Fowlpox virus (strain NVSL) (FPV) protein is mRNA-capping enzyme catalytic subunit.